The following is a 53-amino-acid chain: Small polypeptide DEVIL 16 (53 aa).

An N-linked (GlcNAc...) asparagine glycan is attached at asparagine 6. The required for DVL/RTFL small polypeptide activity stretch occupies residues 14 to 45; the sequence is TFGQKCSHVVKKQRAKFYILRRCIAMLVCWHD. A helical membrane pass occupies residues 30 to 46; sequence FYILRRCIAMLVCWHDQ.

This sequence belongs to the DVL/RTFL small polypeptides family. As to expression, mostly expressed in stems, flower buds, flowers and seedling shoots, to a lesser extent, in roots and young cauline leaves, but not in mature rosette leaves. Barely observed in cotyledons and leaf primordia.

Its subcellular location is the cell membrane. Its function is as follows. Small polypeptide acting as a regulatory molecule which coordinates cellular responses required for differentiation, growth and development, probably by restricting polar cell proliferation in lateral organs (e.g. leaves) and coordinating socket cell recruitment and differentiation at trichome sites. Regulates the positional cue and cell proliferation along the body axis. This is Small polypeptide DEVIL 16 from Arabidopsis thaliana (Mouse-ear cress).